Consider the following 358-residue polypeptide: Pseudouridylate synthase RPUSD4, mitochondrial (358 aa).

The N-terminal 12 residues, 1–12 (MRHAREVTFARL), are a transit peptide targeting the mitochondrion.

This sequence belongs to the pseudouridine synthase RluA family.

The protein localises to the mitochondrion matrix. It localises to the nucleus. Its subcellular location is the cytoplasm. The enzyme catalyses uridine in 5S rRNA = pseudouridine in 5S rRNA. It catalyses the reaction a uridine in tRNA = a pseudouridine in tRNA. It carries out the reaction a uridine in mRNA = a pseudouridine in mRNA. Catalyzes uridine to pseudouridine isomerization (pseudouridylation) of different mitochondrial RNA substrates. Acts on position 1397 in 16S mitochondrial ribosomal RNA (16S mt-rRNA). This modification is required for the assembly of 16S mt-rRNA into a functional mitochondrial ribosome. Acts on position 39 in mitochondrial tRNA(Phe). Also catalyzes pseudouridylation of mRNAs in nucleus: acts as a regulator of pre-mRNA splicing by mediating pseudouridylation of pre-mRNAs at locations associated with alternatively spliced regions. Pseudouridylation of pre-mRNAs near splice sites directly regulates mRNA splicing and mRNA 3'-end processing. This chain is Pseudouridylate synthase RPUSD4, mitochondrial, found in Danio rerio (Zebrafish).